We begin with the raw amino-acid sequence, 379 residues long: MGVKGLNQLIKEHAPEAFKEFQLKNLFGRKIAIDASMCLYQFLIAVRQAEGQQLTNDEGETTSHLSGMFYRTIRLVENSIKPVYVFDGKPPVLKGGELEKRLLRREEAIKQRENIKDEGTIEDMVRYEKRTVRVTREQNDEAKKLLELMGVPYVNAPCEAEAQCAELARGGKVFAAASEDMDTICYQPPFLLRHLTFSEARKMPIDQIQYEKVLEALEMDRETFIDLCILLGCDYCETIRGVGPVTAFKLIKEHGSLDKIVEYLTNNPDKTNFKVPEDWPYDEARKLFINPDTIDASEVNLKWKEPDVEGLIQYMVKEKGFSEDRIRSGAEKLKKGLKGGVQGRLDGFFQSVPKPKDSADKKRKNDTKSAKSKKAKTRK.

The segment at 1–105 (MGVKGLNQLI…GELEKRLLRR (105 aa)) is N-domain. Asp34 provides a ligand contact to Mg(2+). Positions 47 and 71 each coordinate DNA. Asp87, Glu159, Glu161, Asp180, and Asp182 together coordinate Mg(2+). The tract at residues 123–254 (DMVRYEKRTV…VTAFKLIKEH (132 aa)) is I-domain. Glu159 contributes to the DNA binding site. The DNA site is built by Gly232 and Asp234. Asp234 is a binding site for Mg(2+). Positions 341–349 (VQGRLDGFF) are interaction with PCNA. Positions 344–379 (RLDGFFQSVPKPKDSADKKRKNDTKSAKSKKAKTRK) are disordered. The segment covering 361-379 (KKRKNDTKSAKSKKAKTRK) has biased composition (basic residues).

It belongs to the XPG/RAD2 endonuclease family. FEN1 subfamily. As to quaternary structure, interacts with PCNA. Three molecules of FEN1 bind to one PCNA trimer with each molecule binding to one PCNA monomer. PCNA stimulates the nuclease activity without altering cleavage specificity. Mg(2+) is required as a cofactor. Post-translationally, phosphorylated. Phosphorylation upon DNA damage induces relocalization to the nuclear plasma.

It is found in the nucleus. Its subcellular location is the nucleolus. The protein resides in the nucleoplasm. It localises to the mitochondrion. Functionally, structure-specific nuclease with 5'-flap endonuclease and 5'-3' exonuclease activities involved in DNA replication and repair. During DNA replication, cleaves the 5'-overhanging flap structure that is generated by displacement synthesis when DNA polymerase encounters the 5'-end of a downstream Okazaki fragment. It enters the flap from the 5'-end and then tracks to cleave the flap base, leaving a nick for ligation. Also involved in the long patch base excision repair (LP-BER) pathway, by cleaving within the apurinic/apyrimidinic (AP) site-terminated flap. Acts as a genome stabilization factor that prevents flaps from equilibrating into structures that lead to duplications and deletions. Also possesses 5'-3' exonuclease activity on nicked or gapped double-stranded DNA, and exhibits RNase H activity. Also involved in replication and repair of rDNA and in repairing mitochondrial DNA. The sequence is that of Flap endonuclease 1 from Debaryomyces hansenii (strain ATCC 36239 / CBS 767 / BCRC 21394 / JCM 1990 / NBRC 0083 / IGC 2968) (Yeast).